Consider the following 452-residue polypeptide: Isocitrate dehydrogenase [NADP], mitochondrial (452 aa).

Residues 1–39 constitute a mitochondrion transit peptide; it reads MAGYLRAVSSLCRASGSTRTWAPAALNVPSWPEQPRRHY. Residues lysine 45, lysine 48, lysine 67, and lysine 69 each carry the N6-acetyllysine modification. N6-acetyllysine; alternate is present on residues lysine 80 and lysine 106. Lysine 80 and lysine 106 each carry N6-succinyllysine; alternate. NADP(+) contacts are provided by residues 115–117 and arginine 122; that span reads TIT. Threonine 117 provides a ligand contact to D-threo-isocitrate. D-threo-isocitrate-binding positions include 134–140 and arginine 149; that span reads SPNGTIR. Lysine 155 bears the N6-acetyllysine mark. Lysine 166 carries the N6-acetyllysine; alternate modification. An N6-succinyllysine; alternate modification is found at lysine 166. D-threo-isocitrate is bound at residue arginine 172. 2 positions are modified to N6-acetyllysine; alternate: lysine 180 and lysine 193. N6-succinyllysine; alternate is present on residues lysine 180 and lysine 193. The residue at position 199 (lysine 199) is an N6-acetyllysine. N6-acetyllysine; alternate is present on lysine 256. Lysine 256 carries the post-translational modification N6-succinyllysine; alternate. N6-acetyllysine occurs at positions 263, 272, 275, and 280. Lysine 282 bears the N6-acetyllysine; alternate mark. Position 282 is an N6-succinyllysine; alternate (lysine 282). Aspartate 291 is a binding site for Mn(2+). NADP(+) is bound at residue lysine 299. Position 314 (aspartate 314) interacts with Mn(2+). NADP(+)-binding positions include 349–354 and asparagine 367; that span reads GTVTRH. An N6-acetyllysine; alternate modification is found at lysine 384. An N6-succinyllysine; alternate modification is found at lysine 384. N6-acetyllysine occurs at positions 400, 413, and 442.

Belongs to the isocitrate and isopropylmalate dehydrogenases family. As to quaternary structure, homodimer. It depends on Mg(2+) as a cofactor. Mn(2+) serves as cofactor. In terms of processing, acetylation at Lys-413 dramatically reduces catalytic activity. Deacetylated by SIRT3.

The protein localises to the mitochondrion. The catalysed reaction is D-threo-isocitrate + NADP(+) = 2-oxoglutarate + CO2 + NADPH. Plays a role in intermediary metabolism and energy production. It may tightly associate or interact with the pyruvate dehydrogenase complex. The chain is Isocitrate dehydrogenase [NADP], mitochondrial (Idh2) from Rattus norvegicus (Rat).